Here is a 340-residue protein sequence, read N- to C-terminus: Glyceraldehyde-3-phosphate dehydrogenase (340 aa).

Residues 13–14 and Gly-112 contribute to the NAD(+) site; that span reads TI. 141-143 contributes to the D-glyceraldehyde 3-phosphate binding site; the sequence is SCN. Cys-142 serves as the catalytic Nucleophile. Residue Arg-170 coordinates NAD(+). Position 196-197 (196-197) interacts with D-glyceraldehyde 3-phosphate; sequence HG. Gln-302 contributes to the NAD(+) binding site.

The protein belongs to the glyceraldehyde-3-phosphate dehydrogenase family. In terms of assembly, homotetramer.

It is found in the cytoplasm. It carries out the reaction D-glyceraldehyde 3-phosphate + phosphate + NADP(+) = (2R)-3-phospho-glyceroyl phosphate + NADPH + H(+). It catalyses the reaction D-glyceraldehyde 3-phosphate + phosphate + NAD(+) = (2R)-3-phospho-glyceroyl phosphate + NADH + H(+). It functions in the pathway carbohydrate degradation; glycolysis; pyruvate from D-glyceraldehyde 3-phosphate: step 1/5. The sequence is that of Glyceraldehyde-3-phosphate dehydrogenase (gap) from Archaeoglobus fulgidus (strain ATCC 49558 / DSM 4304 / JCM 9628 / NBRC 100126 / VC-16).